The primary structure comprises 157 residues: MSQVILDLQIACADSQGLPTEADFQHWLEAVLPQFQEVSEVTIRVVDEAESHELNLTYRGKDKPTNVLSFPFEAPPEIELPLLGDLIICRQVVEQEAVEQEKALLAHWAHMVVHGSLHLLGYDHIVDDEAEEMESIETEIMQSLGYPDPYISEKDPE.

H114, H118, and H124 together coordinate Zn(2+).

It belongs to the endoribonuclease YbeY family. The cofactor is Zn(2+).

The protein localises to the cytoplasm. Single strand-specific metallo-endoribonuclease involved in late-stage 70S ribosome quality control and in maturation of the 3' terminus of the 16S rRNA. The polypeptide is Endoribonuclease YbeY (Yersinia enterocolitica serotype O:8 / biotype 1B (strain NCTC 13174 / 8081)).